The primary structure comprises 694 residues: DNA-directed RNA polymerase subunit beta' (694 aa).

Zn(2+) is bound by residues Cys69, Cys71, Cys87, and Cys90. Mg(2+) is bound by residues Asp489, Asp491, and Asp493.

It belongs to the RNA polymerase beta' chain family. RpoC1 subfamily. As to quaternary structure, in plastids the minimal PEP RNA polymerase catalytic core is composed of four subunits: alpha, beta, beta', and beta''. When a (nuclear-encoded) sigma factor is associated with the core the holoenzyme is formed, which can initiate transcription. It depends on Mg(2+) as a cofactor. Requires Zn(2+) as cofactor.

Its subcellular location is the plastid. It is found in the chloroplast. It carries out the reaction RNA(n) + a ribonucleoside 5'-triphosphate = RNA(n+1) + diphosphate. DNA-dependent RNA polymerase catalyzes the transcription of DNA into RNA using the four ribonucleoside triphosphates as substrates. This chain is DNA-directed RNA polymerase subunit beta', found in Adiantum capillus-veneris (Maidenhair fern).